A 517-amino-acid polypeptide reads, in one-letter code: Crotonobetaine/carnitine--CoA ligase (517 aa).

The protein belongs to the ATP-dependent AMP-binding enzyme family.

It catalyses the reaction 4-(trimethylamino)butanoate + ATP + CoA = 4-(trimethylamino)butanoyl-CoA + AMP + diphosphate. The catalysed reaction is crotonobetaine + ATP + CoA = crotonobetainyl-CoA + AMP + diphosphate. It carries out the reaction (R)-carnitine + ATP + CoA = (R)-carnitinyl-CoA + AMP + diphosphate. The protein operates within amine and polyamine metabolism; carnitine metabolism. In terms of biological role, catalyzes the transfer of CoA to carnitine, generating the initial carnitinyl-CoA needed for the CaiB reaction cycle. Also has activity toward crotonobetaine and gamma-butyrobetaine. The protein is Crotonobetaine/carnitine--CoA ligase of Citrobacter koseri (strain ATCC BAA-895 / CDC 4225-83 / SGSC4696).